The chain runs to 178 residues: Alkyl hydroperoxide reductase AhpD (178 aa).

Catalysis depends on cysteine 130, which acts as the Proton donor. An intrachain disulfide couples cysteine 130 to cysteine 133. Cysteine 133 functions as the Cysteine sulfenic acid (-SOH) intermediate in the catalytic mechanism.

This sequence belongs to the AhpD family. In terms of assembly, homotrimer.

The catalysed reaction is N(6)-[(R)-dihydrolipoyl]-L-lysyl-[lipoyl-carrier protein] + a hydroperoxide = N(6)-[(R)-lipoyl]-L-lysyl-[lipoyl-carrier protein] + an alcohol + H2O. Functionally, antioxidant protein with alkyl hydroperoxidase activity. Required for the reduction of the AhpC active site cysteine residues and for the regeneration of the AhpC enzyme activity. The chain is Alkyl hydroperoxide reductase AhpD from Mycobacterium marinum (strain ATCC BAA-535 / M).